Consider the following 129-residue polypeptide: MSPSTPTDPCPCGRAAGYAQCCGQYHAGAAAPDAETLMRARYSAYVRRNVDYLLASWHPSTRPAELALDEGGRTTWLGLNVQRAIATGADTAEVVFLARYRIGGGSAVRMTEHSRFVREDGHWYYLDAR.

Belongs to the UPF0225 family.

This is UPF0225 protein XC_4246 from Xanthomonas campestris pv. campestris (strain 8004).